Reading from the N-terminus, the 370-residue chain is 3-isopropylmalate dehydrogenase (370 aa).

77–90 is a binding site for NAD(+); sequence GPKWDSVPYEVRPE. 4 residues coordinate substrate: arginine 97, arginine 107, arginine 135, and aspartate 226. Mg(2+)-binding residues include aspartate 226, aspartate 250, and aspartate 254. 290 to 302 contacts NAD(+); it reads GSAPDIAGKGIAN.

Belongs to the isocitrate and isopropylmalate dehydrogenases family. LeuB type 1 subfamily. Homodimer. It depends on Mg(2+) as a cofactor. Mn(2+) is required as a cofactor.

The protein localises to the cytoplasm. The enzyme catalyses (2R,3S)-3-isopropylmalate + NAD(+) = 4-methyl-2-oxopentanoate + CO2 + NADH. Its pathway is amino-acid biosynthesis; L-leucine biosynthesis; L-leucine from 3-methyl-2-oxobutanoate: step 3/4. Functionally, catalyzes the oxidation of 3-carboxy-2-hydroxy-4-methylpentanoate (3-isopropylmalate) to 3-carboxy-4-methyl-2-oxopentanoate. The product decarboxylates to 4-methyl-2 oxopentanoate. The chain is 3-isopropylmalate dehydrogenase from Rhizobium etli (strain ATCC 51251 / DSM 11541 / JCM 21823 / NBRC 15573 / CFN 42).